Consider the following 468-residue polypeptide: Argininosuccinate lyase (468 aa).

It belongs to the lyase 1 family. Argininosuccinate lyase subfamily.

It is found in the cytoplasm. The enzyme catalyses 2-(N(omega)-L-arginino)succinate = fumarate + L-arginine. It participates in amino-acid biosynthesis; L-arginine biosynthesis; L-arginine from L-ornithine and carbamoyl phosphate: step 3/3. This Paraburkholderia phymatum (strain DSM 17167 / CIP 108236 / LMG 21445 / STM815) (Burkholderia phymatum) protein is Argininosuccinate lyase.